A 212-amino-acid polypeptide reads, in one-letter code: Pyridoxine/pyridoxamine 5'-phosphate oxidase (212 aa).

Residues 9 to 12 and Lys67 contribute to the substrate site; that span reads RKSY. FMN contacts are provided by residues 62 to 67, 77 to 78, Arg83, and Lys84; these read RIVLIK and FT. Residues Tyr124, Arg128, and Ser132 each coordinate substrate. FMN contacts are provided by residues 141–142 and Trp185; that span reads QS. 191–193 contacts substrate; sequence RLH. Residue Arg195 participates in FMN binding.

The protein belongs to the pyridoxamine 5'-phosphate oxidase family. As to quaternary structure, homodimer. FMN is required as a cofactor.

The enzyme catalyses pyridoxamine 5'-phosphate + O2 + H2O = pyridoxal 5'-phosphate + H2O2 + NH4(+). It catalyses the reaction pyridoxine 5'-phosphate + O2 = pyridoxal 5'-phosphate + H2O2. Its pathway is cofactor metabolism; pyridoxal 5'-phosphate salvage; pyridoxal 5'-phosphate from pyridoxamine 5'-phosphate: step 1/1. The protein operates within cofactor metabolism; pyridoxal 5'-phosphate salvage; pyridoxal 5'-phosphate from pyridoxine 5'-phosphate: step 1/1. Its function is as follows. Catalyzes the oxidation of either pyridoxine 5'-phosphate (PNP) or pyridoxamine 5'-phosphate (PMP) into pyridoxal 5'-phosphate (PLP). The polypeptide is Pyridoxine/pyridoxamine 5'-phosphate oxidase (Verminephrobacter eiseniae (strain EF01-2)).